The chain runs to 754 residues: ToMV susceptible protein tm-1(GCR26) (754 aa).

The segment at 1–201 (MATAQSNSPR…AGMVIGRLES (201 aa)) is N-terminal inhibitory domain NN. ATP is bound by residues 18–20 (DTK), Thr55, Arg92, and 124–127 (GSGG). The interval 211-431 (KFTVGVTMFG…VDSFLEMSPK (221 aa)) is N-terminal inhibitory domain NC.

This sequence belongs to the UPF0261 family. As to quaternary structure, homodimer. In terms of assembly, (Microbial infection) Binds, via an ATP bridge, to the tobamoviruses avirulent (Avr) replication proteins (large and small subunits, e.g. tobacco mild green mosaic virus (TMGMV) AC P18339 and pepper mild mottle virus (PMMoV) AC P89657) to inhibit their function after the translation of tobamoviruses RNA, but before the viral replication complex formation on the membrane surfaces; this interaction is not possible with resistance-breaking strains replication proteins.

Its function is as follows. Inhibitor of viral RNA replication which confers resistance to some tobamoviruses including tobacco mild green mosaic virus (TMGMV) and pepper mild mottle virus (PMMoV), but not to tomato mosaic virus (ToMV strains L, ToMV0 and ToMV1-2) and tobacco mosaic virus (TMV). Prevents tobamoviruses RNA replication by affecting the association of tobamoviruses replication proteins (large and small subunits) with host membrane-associated proteins (e.g. TOM1, TOM2A and ARL8), thus inhibiting the replication complex formation on the membranes and avoiding viral negative-strand RNA synthesis. This is ToMV susceptible protein tm-1(GCR26) from Solanum lycopersicum (Tomato).